The chain runs to 170 residues: Small ribosomal subunit protein uS4 (170 aa).

The 65-residue stretch at 100-164 folds into the S4 RNA-binding domain; that stretch reads RRLQTVVYRE…SDLTDELHPA (65 aa).

It belongs to the universal ribosomal protein uS4 family. As to quaternary structure, part of the 30S ribosomal subunit. Contacts protein S5. The interaction surface between S4 and S5 is involved in control of translational fidelity.

Functionally, one of the primary rRNA binding proteins, it binds directly to 16S rRNA where it nucleates assembly of the body of the 30S subunit. Its function is as follows. With S5 and S12 plays an important role in translational accuracy. In Halobacterium salinarum (strain ATCC 29341 / DSM 671 / R1), this protein is Small ribosomal subunit protein uS4.